The sequence spans 228 residues: Putative N-acetylmannosamine-6-phosphate 2-epimerase (228 aa).

The protein belongs to the NanE family.

The enzyme catalyses an N-acyl-D-glucosamine 6-phosphate = an N-acyl-D-mannosamine 6-phosphate. It participates in amino-sugar metabolism; N-acetylneuraminate degradation; D-fructose 6-phosphate from N-acetylneuraminate: step 3/5. Converts N-acetylmannosamine-6-phosphate (ManNAc-6-P) to N-acetylglucosamine-6-phosphate (GlcNAc-6-P). The polypeptide is Putative N-acetylmannosamine-6-phosphate 2-epimerase (Mycoplasmopsis pulmonis (strain UAB CTIP) (Mycoplasma pulmonis)).